The chain runs to 574 residues: Phosphoenolpyruvate-protein phosphotransferase (574 aa).

Histidine 190 serves as the catalytic Tele-phosphohistidine intermediate. Residues arginine 297 and arginine 333 each contribute to the phosphoenolpyruvate site. Mg(2+) contacts are provided by glutamate 432 and aspartate 456. Phosphoenolpyruvate contacts are provided by residues 455 to 456 (ND) and arginine 466. Cysteine 503 acts as the Proton donor in catalysis.

Belongs to the PEP-utilizing enzyme family. As to quaternary structure, homodimer. It depends on Mg(2+) as a cofactor.

It is found in the cytoplasm. The catalysed reaction is L-histidyl-[protein] + phosphoenolpyruvate = N(pros)-phospho-L-histidyl-[protein] + pyruvate. In terms of biological role, general (non sugar-specific) component of the phosphoenolpyruvate-dependent sugar phosphotransferase system (sugar PTS). This major carbohydrate active-transport system catalyzes the phosphorylation of incoming sugar substrates concomitantly with their translocation across the cell membrane. Enzyme I transfers the phosphoryl group from phosphoenolpyruvate (PEP) to the phosphoryl carrier protein (HPr). In Latilactobacillus sakei (Lactobacillus sakei), this protein is Phosphoenolpyruvate-protein phosphotransferase (ptsI).